Reading from the N-terminus, the 224-residue chain is 7-cyano-7-deazaguanine synthase (224 aa).

12–22 is an ATP binding site; sequence LSGGLDSSTVT. 4 residues coordinate Zn(2+): C193, C201, C204, and C207.

Belongs to the QueC family. Requires Zn(2+) as cofactor.

The catalysed reaction is 7-carboxy-7-deazaguanine + NH4(+) + ATP = 7-cyano-7-deazaguanine + ADP + phosphate + H2O + H(+). The protein operates within purine metabolism; 7-cyano-7-deazaguanine biosynthesis. Catalyzes the ATP-dependent conversion of 7-carboxy-7-deazaguanine (CDG) to 7-cyano-7-deazaguanine (preQ(0)). The chain is 7-cyano-7-deazaguanine synthase from Prochlorococcus marinus (strain MIT 9312).